A 100-amino-acid chain; its full sequence is Small ribosomal subunit protein uS14c (100 aa).

It belongs to the universal ribosomal protein uS14 family. In terms of assembly, part of the 30S ribosomal subunit.

It localises to the plastid. It is found in the chloroplast. Functionally, binds 16S rRNA, required for the assembly of 30S particles. This is Small ribosomal subunit protein uS14c from Oedogonium cardiacum (Filamentous green alga).